Here is a 363-residue protein sequence, read N- to C-terminus: tRNA N6-adenosine threonylcarbamoyltransferase (363 aa).

Residues His-121 and His-125 each coordinate Fe cation. Substrate contacts are provided by residues 143–147, Asp-176, Gly-189, and Asn-287; that span reads LASGG. Asp-315 is a Fe cation binding site.

It belongs to the KAE1 / TsaD family. It depends on Fe(2+) as a cofactor.

It is found in the cytoplasm. It catalyses the reaction L-threonylcarbamoyladenylate + adenosine(37) in tRNA = N(6)-L-threonylcarbamoyladenosine(37) in tRNA + AMP + H(+). Required for the formation of a threonylcarbamoyl group on adenosine at position 37 (t(6)A37) in tRNAs that read codons beginning with adenine. Is involved in the transfer of the threonylcarbamoyl moiety of threonylcarbamoyl-AMP (TC-AMP) to the N6 group of A37, together with TsaE and TsaB. TsaD likely plays a direct catalytic role in this reaction. The protein is tRNA N6-adenosine threonylcarbamoyltransferase of Rhodopseudomonas palustris (strain ATCC BAA-98 / CGA009).